We begin with the raw amino-acid sequence, 170 residues long: Peptide methionine sulfoxide reductase MsrA (170 aa).

Cys-13 is an active-site residue.

This sequence belongs to the MsrA Met sulfoxide reductase family.

The catalysed reaction is L-methionyl-[protein] + [thioredoxin]-disulfide + H2O = L-methionyl-(S)-S-oxide-[protein] + [thioredoxin]-dithiol. The enzyme catalyses [thioredoxin]-disulfide + L-methionine + H2O = L-methionine (S)-S-oxide + [thioredoxin]-dithiol. In terms of biological role, has an important function as a repair enzyme for proteins that have been inactivated by oxidation. Catalyzes the reversible oxidation-reduction of methionine sulfoxide in proteins to methionine. This is Peptide methionine sulfoxide reductase MsrA from Nocardia farcinica (strain IFM 10152).